The chain runs to 331 residues: WW domain-containing protein C2F3.14c (331 aa).

The interval 1–184 (MSSSKDCKAT…TNENQAQPSI (184 aa)) is disordered. The span at 9 to 22 (ATSNVDQTIPASNV) shows a compositional bias: polar residues. Low complexity predominate over residues 23-41 (NSGDFISSNTSSSNSENSN). Over residues 57 to 89 (SFISENTPKNTFESTQTYENLESISKNEPTSEA) the composition is skewed to polar residues. The segment covering 105–145 (REPPLPNEPVPEEPLPGEPPLPDEPVPEEPLPGEPPLPNEP) has biased composition (pro residues). The segment covering 158–184 (SDETVSETSKNDTSNSPTNENQAQPSI) has biased composition (polar residues). One can recognise a WW domain in the interval 187–220 (SEGHRIAAIWDPSQQAYYFWDTLTNTTSWNNPLE). The tract at residues 290–309 (YTRKEMEQMKRRTKEKKEMK) is disordered. Basic and acidic residues predominate over residues 292–309 (RKEMEQMKRRTKEKKEMK).

The protein resides in the nucleus. This chain is WW domain-containing protein C2F3.14c, found in Schizosaccharomyces pombe (strain 972 / ATCC 24843) (Fission yeast).